The sequence spans 211 residues: Protein-L-isoaspartate O-methyltransferase (211 aa).

The active site involves Ser-62.

This sequence belongs to the methyltransferase superfamily. L-isoaspartyl/D-aspartyl protein methyltransferase family.

It localises to the cytoplasm. It carries out the reaction [protein]-L-isoaspartate + S-adenosyl-L-methionine = [protein]-L-isoaspartate alpha-methyl ester + S-adenosyl-L-homocysteine. Its function is as follows. Catalyzes the methyl esterification of L-isoaspartyl residues in peptides and proteins that result from spontaneous decomposition of normal L-aspartyl and L-asparaginyl residues. It plays a role in the repair and/or degradation of damaged proteins. The sequence is that of Protein-L-isoaspartate O-methyltransferase from Shewanella baltica (strain OS195).